Here is a 143-residue protein sequence, read N- to C-terminus: Transcriptional regulator MraZ (143 aa).

2 SpoVT-AbrB domains span residues 5–47 (EYKH…PMHE) and 76–119 (ATEC…SSKR).

It belongs to the MraZ family. As to quaternary structure, forms oligomers.

The protein resides in the cytoplasm. The protein localises to the nucleoid. The polypeptide is Transcriptional regulator MraZ (Halothermothrix orenii (strain H 168 / OCM 544 / DSM 9562)).